A 69-amino-acid polypeptide reads, in one-letter code: U2-agatoxin-Ao1e (69 aa).

Positions 1–20 (MRAIISVLLISAMVFSIIEA) are cleaved as a signal peptide. Positions 21–34 (VPLEEGLQLFEAER) are excised as a propeptide. Intrachain disulfides connect cysteine 37–cysteine 53, cysteine 44–cysteine 58, and cysteine 52–cysteine 68.

It belongs to the neurotoxin 01 (U2-agtx) family. In terms of tissue distribution, expressed by the venom gland.

Its subcellular location is the secreted. Insect active toxin causing rapid but reversible paralysis in crickets. No activity shown in mammals. Does not show effect on mammalian voltage-gated calcium channels. In Agelena orientalis (Funnel-web spider), this protein is U2-agatoxin-Ao1e.